The primary structure comprises 72 residues: Mitochondrial import receptor subunit TOM7-1 (72 aa).

Topologically, residues 2-41 (LKPKGKNTKKAAAADEDDGAVAVVGKFVKEWGTWTAKKAK) are cytoplasmic. Residues 42–59 (VITHYGFIPLVIIIGMNS) traverse the membrane as a helical segment. The Mitochondrial intermembrane segment spans residues 60 to 72 (EPKPSLSQLLSPV).

It belongs to the Tom7 family. As to quaternary structure, forms part of the preprotein translocase complex of the outer mitochondrial membrane (TOM complex).

It is found in the mitochondrion outer membrane. In terms of biological role, seems to act as a modulator of the dynamics of the mitochondrial protein transport machinery. Seems to promote the dissociation of subunits of the outer membrane translocase. The chain is Mitochondrial import receptor subunit TOM7-1 (TOM7-1) from Solanum tuberosum (Potato).